A 456-amino-acid polypeptide reads, in one-letter code: Bifunctional protein GlmU (456 aa).

A pyrophosphorylase region spans residues 1–229 (MLNSAMSVVI…ISETDGVNNR (229 aa)). UDP-N-acetyl-alpha-D-glucosamine is bound by residues 11-14 (LAAG), lysine 25, glutamine 76, 81-82 (GT), 103-105 (YGD), glycine 140, glutamate 154, asparagine 169, and asparagine 227. Aspartate 105 lines the Mg(2+) pocket. Asparagine 227 contacts Mg(2+). The interval 230-250 (LQLSRLERIYQAEQAEKLLLS) is linker. The N-acetyltransferase stretch occupies residues 251–456 (GVMLRDPARF…QGWQRPVKKK (206 aa)). Residues arginine 333 and lysine 351 each contribute to the UDP-N-acetyl-alpha-D-glucosamine site. The active-site Proton acceptor is the histidine 363. UDP-N-acetyl-alpha-D-glucosamine contacts are provided by tyrosine 366 and asparagine 377. Residues alanine 380, 386 to 387 (NY), serine 405, alanine 423, and arginine 440 each bind acetyl-CoA.

This sequence in the N-terminal section; belongs to the N-acetylglucosamine-1-phosphate uridyltransferase family. In the C-terminal section; belongs to the transferase hexapeptide repeat family. As to quaternary structure, homotrimer. Mg(2+) serves as cofactor.

Its subcellular location is the cytoplasm. It catalyses the reaction alpha-D-glucosamine 1-phosphate + acetyl-CoA = N-acetyl-alpha-D-glucosamine 1-phosphate + CoA + H(+). The enzyme catalyses N-acetyl-alpha-D-glucosamine 1-phosphate + UTP + H(+) = UDP-N-acetyl-alpha-D-glucosamine + diphosphate. The protein operates within nucleotide-sugar biosynthesis; UDP-N-acetyl-alpha-D-glucosamine biosynthesis; N-acetyl-alpha-D-glucosamine 1-phosphate from alpha-D-glucosamine 6-phosphate (route II): step 2/2. It participates in nucleotide-sugar biosynthesis; UDP-N-acetyl-alpha-D-glucosamine biosynthesis; UDP-N-acetyl-alpha-D-glucosamine from N-acetyl-alpha-D-glucosamine 1-phosphate: step 1/1. It functions in the pathway bacterial outer membrane biogenesis; LPS lipid A biosynthesis. Functionally, catalyzes the last two sequential reactions in the de novo biosynthetic pathway for UDP-N-acetylglucosamine (UDP-GlcNAc). The C-terminal domain catalyzes the transfer of acetyl group from acetyl coenzyme A to glucosamine-1-phosphate (GlcN-1-P) to produce N-acetylglucosamine-1-phosphate (GlcNAc-1-P), which is converted into UDP-GlcNAc by the transfer of uridine 5-monophosphate (from uridine 5-triphosphate), a reaction catalyzed by the N-terminal domain. The protein is Bifunctional protein GlmU of Salmonella dublin (strain CT_02021853).